A 189-amino-acid chain; its full sequence is NADH-quinone oxidoreductase subunit B (189 aa).

Residues cysteine 39, cysteine 40, cysteine 104, and cysteine 135 each coordinate [4Fe-4S] cluster.

It belongs to the complex I 20 kDa subunit family. In terms of assembly, NDH-1 is composed of 14 different subunits. Subunits NuoB, C, D, E, F, and G constitute the peripheral sector of the complex. [4Fe-4S] cluster serves as cofactor.

It localises to the cell inner membrane. It catalyses the reaction a quinone + NADH + 5 H(+)(in) = a quinol + NAD(+) + 4 H(+)(out). Its function is as follows. NDH-1 shuttles electrons from NADH, via FMN and iron-sulfur (Fe-S) centers, to quinones in the respiratory chain. The immediate electron acceptor for the enzyme in this species is believed to be a menaquinone. Couples the redox reaction to proton translocation (for every two electrons transferred, four hydrogen ions are translocated across the cytoplasmic membrane), and thus conserves the redox energy in a proton gradient. This is NADH-quinone oxidoreductase subunit B from Chlorobaculum tepidum (strain ATCC 49652 / DSM 12025 / NBRC 103806 / TLS) (Chlorobium tepidum).